We begin with the raw amino-acid sequence, 620 residues long: Cell fusion protein cfr1 (620 aa).

The Fibronectin type-III domain maps to 79-169; the sequence is LPSPPVLKLK…KHITIKTLRM (91 aa). The BRCT domain maps to 167–256; it reads LRMIDLTGIQ…RLVNVSGFYI (90 aa). Disordered stretches follow at residues 287–566 and 588–620; these read QPKN…PEKA and KQSS…VNID. A compositionally biased stretch (polar residues) spans 303–314; it reads APQQTTQQGTQN. Over residues 315-330 the composition is skewed to low complexity; it reads SANAEPSSSASVPAEA. Residues 352–375 show a composition bias toward polar residues; sequence SKPNEAPTSSENIKADQPENSTKQ. Positions 382-392 are enriched in basic and acidic residues; that stretch reads MQIKDAEEHSN. The span at 393–406 shows a compositional bias: polar residues; that stretch reads LESTPAAQQTSEVE. Low complexity predominate over residues 424–434; the sequence is NVNEENNTPET. A compositionally biased stretch (polar residues) spans 445-468; sequence NTAAESLINQEETTSGEAVTKSTV. Positions 472-484 are enriched in acidic residues; it reads ANEEEAEPNEIIE. The span at 506–515 shows a compositional bias: polar residues; that stretch reads NNANSENANG. Basic and acidic residues predominate over residues 517–537; it reads TDEKIIEAPLDTKENSDDDKP.

The protein belongs to the CHS5 family.

It is found in the golgi apparatus. In terms of biological role, required for cell fusion, independently of fus1. Appears to have a role in transporting proteins that are involved in mating. May act as a scaffold to retain cell fusion proteins in the cisternae of the Golgi. Degraded at the onset of mating and this leads to release of cell fusion proteins. The polypeptide is Cell fusion protein cfr1 (cfr1) (Schizosaccharomyces pombe (strain 972 / ATCC 24843) (Fission yeast)).